Consider the following 242-residue polypeptide: UPF0157 protein PA4798 (242 aa).

A disordered region spans residues 215-242; it reads AGAESTPGGPADTAYFESLRSRVSKPQD.

It belongs to the UPF0157 (GrpB) family.

The sequence is that of UPF0157 protein PA4798 from Pseudomonas aeruginosa (strain ATCC 15692 / DSM 22644 / CIP 104116 / JCM 14847 / LMG 12228 / 1C / PRS 101 / PAO1).